A 375-amino-acid polypeptide reads, in one-letter code: Queuine tRNA-ribosyltransferase (375 aa).

Asp90 (proton acceptor) is an active-site residue. Residues 90 to 94, Asp144, Gln190, and Gly217 each bind substrate; that span reads DSGGF. Residues 248–254 are RNA binding; the sequence is GIGTPHY. The active-site Nucleophile is Asp267. The interval 272–276 is RNA binding; important for wobble base 34 recognition; the sequence is TRIAR. Zn(2+) contacts are provided by Cys305, Cys307, Cys310, and His336.

It belongs to the queuine tRNA-ribosyltransferase family. As to quaternary structure, homodimer. Within each dimer, one monomer is responsible for RNA recognition and catalysis, while the other monomer binds to the replacement base PreQ1. Zn(2+) serves as cofactor.

It catalyses the reaction 7-aminomethyl-7-carbaguanine + guanosine(34) in tRNA = 7-aminomethyl-7-carbaguanosine(34) in tRNA + guanine. It functions in the pathway tRNA modification; tRNA-queuosine biosynthesis. Functionally, catalyzes the base-exchange of a guanine (G) residue with the queuine precursor 7-aminomethyl-7-deazaguanine (PreQ1) at position 34 (anticodon wobble position) in tRNAs with GU(N) anticodons (tRNA-Asp, -Asn, -His and -Tyr). Catalysis occurs through a double-displacement mechanism. The nucleophile active site attacks the C1' of nucleotide 34 to detach the guanine base from the RNA, forming a covalent enzyme-RNA intermediate. The proton acceptor active site deprotonates the incoming PreQ1, allowing a nucleophilic attack on the C1' of the ribose to form the product. After dissociation, two additional enzymatic reactions on the tRNA convert PreQ1 to queuine (Q), resulting in the hypermodified nucleoside queuosine (7-(((4,5-cis-dihydroxy-2-cyclopenten-1-yl)amino)methyl)-7-deazaguanosine). The sequence is that of Queuine tRNA-ribosyltransferase from Borrelia hermsii (strain HS1 / DAH).